A 273-amino-acid polypeptide reads, in one-letter code: Undecaprenyl-diphosphatase (273 aa).

A run of 8 helical transmembrane segments spans residues 3–23 (IVEI…EFAP), 48–68 (AANT…VVVF), 92–112 (MQVI…EDYI), 116–136 (LFST…MIAA), 152–172 (ITYK…WPGF), 193–213 (ADFT…LSLL), 220–240 (TIDA…FALI), and 252–272 (IRLV…YIVY).

The protein belongs to the UppP family.

It is found in the cell membrane. The enzyme catalyses di-trans,octa-cis-undecaprenyl diphosphate + H2O = di-trans,octa-cis-undecaprenyl phosphate + phosphate + H(+). In terms of biological role, catalyzes the dephosphorylation of undecaprenyl diphosphate (UPP). Confers resistance to bacitracin. This chain is Undecaprenyl-diphosphatase, found in Geobacillus sp. (strain WCH70).